Reading from the N-terminus, the 301-residue chain is MEKMCSEFRPDGKRPQPVIGHVLVEALPYIRQFEGKTFVIKYGGAAMKDEVLKNIFAENVTLLRKVGIKVVIVHGGGDAITKTSDKMGLETTFVHGKRVTDLETINVVQMTLAGKVNQDIVQLINEDGGNAVGVSGLDADMIRAVPAANAETLGLVGQVAEINTRYIDLLTDAGLIPVIAPIGYDMESNVYNINADDAAAAIAVALKAEKLIYISDVEGVRVGDRILKTICKADAAEFIERGVITGGMIPKVVSAYQTLDGGVGKVHLIDGQITHALLLEVFTNEGVGTQFVVETEKEILS.

Substrate contacts are provided by residues 76–77 (GG), Arg-98, and Asn-192.

It belongs to the acetylglutamate kinase family. ArgB subfamily.

The protein localises to the cytoplasm. It carries out the reaction N-acetyl-L-glutamate + ATP = N-acetyl-L-glutamyl 5-phosphate + ADP. Its pathway is amino-acid biosynthesis; L-arginine biosynthesis; N(2)-acetyl-L-ornithine from L-glutamate: step 2/4. Catalyzes the ATP-dependent phosphorylation of N-acetyl-L-glutamate. This is Acetylglutamate kinase from Chlorobaculum parvum (strain DSM 263 / NCIMB 8327) (Chlorobium vibrioforme subsp. thiosulfatophilum).